The primary structure comprises 437 residues: MAAPSWRGARLVQSVLRVWQVGPHVARERVIPFSSLLGFQRRCVSCVAGSAFSGPRLASASRSNGQGSALDHFLGFSQPDSSVTPCVPAVSMNRDEQDVLLVHHPDMPENSRVLRVVLLGAPNAGKSTLSNQLLGRKVFPVSRKVHTTRCQALGVITEKETQVILLDTPGIISPGKQKRHHLELSLLEDPWKSMESADLVVVLVDVSDKWTRNQLSPQLLRCLTKYSQIPSVLVMNKVDCLKQKSVLLELTAALTEGVVNGKKLKMRQAFHSHPGTHCPSPAVKDPNTQSVGNPQRIGWPHFKEIFMLSALSQEDVKTLKQYLLTQAQPGPWEYHSAVLTSQTPEEICANIIREKLLEHLPQEVPYNVQQKTAVWEEGPGGELVIQQKLLVPKESYVKLLIGPKGHVISQIAQEAGHDLMDIFLCDVDIRLSVKLLK.

A mitochondrion-targeting transit peptide spans 1–43; that stretch reads MAAPSWRGARLVQSVLRVWQVGPHVARERVIPFSSLLGFQRRC. Positions 112-330 constitute an Era-type G domain; sequence RVLRVVLLGA…QYLLTQAQPG (219 aa). The interval 120-127 is G1; the sequence is GAPNAGKS. 120–127 contacts GTP; that stretch reads GAPNAGKS. The tract at residues 146–150 is G2; sequence HTTRC. Residues 167–170 are G3; the sequence is DTPG. GTP is bound at residue 167–171; the sequence is DTPGI. The residue at position 173 (S173) is a Phosphoserine. Position 236–239 (236–239) interacts with GTP; the sequence is NKVD. The segment at 236 to 239 is G4; sequence NKVD. The tract at residues 271-290 is disordered; sequence HSHPGTHCPSPAVKDPNTQS. A G5 region spans residues 308–310; it reads LSA. The KH type-2 domain maps to 360–437; sequence LPQEVPYNVQ…DIRLSVKLLK (78 aa).

The protein belongs to the TRAFAC class TrmE-Era-EngA-EngB-Septin-like GTPase superfamily. Era GTPase family.

It is found in the mitochondrion matrix. Its subcellular location is the mitochondrion inner membrane. Its function is as follows. Probable GTPase that plays a role in the mitochondrial ribosomal small subunit assembly. Specifically binds the 12S mitochondrial rRNA (12S mt-rRNA) to a 33 nucleotide section delineating the 3' terminal stem-loop region. May act as a chaperone that protects the 12S mt-rRNA on the 28S mitoribosomal subunit during ribosomal small subunit assembly. This is GTPase Era, mitochondrial (ERAL1) from Homo sapiens (Human).